Reading from the N-terminus, the 108-residue chain is uncharacterized protein (108 aa).

The chain crosses the membrane as a helical span at residues 72 to 94; the sequence is LGLHTSVFFFLRIVCMSSAASVF.

It is found in the membrane. This is an uncharacterized protein from Saccharomyces cerevisiae (strain ATCC 204508 / S288c) (Baker's yeast).